A 504-amino-acid polypeptide reads, in one-letter code: Xylose import ATP-binding protein XylG (504 aa).

2 ABC transporter domains span residues 6–243 and 260–504; these read LEMK…VGRE and LKVD…TGGK. 38-45 contributes to the ATP binding site; sequence GENGAGKS.

This sequence belongs to the ABC transporter superfamily. Xylose importer (TC 3.A.1.2.4) family. As to quaternary structure, the complex is composed of two ATP-binding proteins (XylG), two transmembrane proteins (XylH) and a solute-binding protein (XylF).

The protein localises to the cell membrane. It catalyses the reaction D-xylose(out) + ATP + H2O = D-xylose(in) + ADP + phosphate + H(+). Part of the ABC transporter complex XylFGH involved in xylose import. Responsible for energy coupling to the transport system. The polypeptide is Xylose import ATP-binding protein XylG (Geobacillus kaustophilus (strain HTA426)).